The primary structure comprises 129 residues: Large ribosomal subunit protein bL12 (129 aa).

Belongs to the bacterial ribosomal protein bL12 family. In terms of assembly, homodimer. Part of the ribosomal stalk of the 50S ribosomal subunit. Forms a multimeric L10(L12)X complex, where L10 forms an elongated spine to which 2 to 4 L12 dimers bind in a sequential fashion. Binds GTP-bound translation factors.

Functionally, forms part of the ribosomal stalk which helps the ribosome interact with GTP-bound translation factors. Is thus essential for accurate translation. The chain is Large ribosomal subunit protein bL12 from Micrococcus luteus (strain ATCC 4698 / DSM 20030 / JCM 1464 / CCM 169 / CCUG 5858 / IAM 1056 / NBRC 3333 / NCIMB 9278 / NCTC 2665 / VKM Ac-2230) (Micrococcus lysodeikticus).